Consider the following 256-residue polypeptide: Ribonuclease HII (256 aa).

The RNase H type-2 domain occupies 72 to 256; that stretch reads ALICGIDEVG…SFEPIKSMMK (185 aa). Positions 78, 79, and 170 each coordinate a divalent metal cation.

It belongs to the RNase HII family. Requires Mn(2+) as cofactor. The cofactor is Mg(2+).

It is found in the cytoplasm. The catalysed reaction is Endonucleolytic cleavage to 5'-phosphomonoester.. In terms of biological role, endonuclease that specifically degrades the RNA of RNA-DNA hybrids. The chain is Ribonuclease HII from Staphylococcus epidermidis (strain ATCC 12228 / FDA PCI 1200).